The chain runs to 445 residues: KICSTOR subunit 2 (445 aa).

The protein belongs to the KICS2 family. Part of the KICSTOR complex composed of KPTN, ITFG2, KICS2 and SZT2. SZT2 probably serves as a link between the other three proteins in the KICSTOR complex and may mediate the direct interaction with the GATOR complex via GATOR1. The KICSTOR complex interacts directly with the GATOR1 complex and most probably indirectly with the GATOR2 complex in an amino acid-independent manner.

Its subcellular location is the lysosome membrane. Functionally, as part of the KICSTOR complex functions in the amino acid-sensing branch of the TORC1 signaling pathway. Recruits, in an amino acid-independent manner, the GATOR1 complex to the lysosomal membranes and allows its interaction with GATOR2 and the RAG GTPases. Functions upstream of the RAG GTPases and is required to negatively regulate mTORC1 signaling in absence of amino acids. In absence of the KICSTOR complex mTORC1 is constitutively localized to the lysosome and activated. The KICSTOR complex is also probably involved in the regulation of mTORC1 by glucose. In Mus musculus (Mouse), this protein is KICSTOR subunit 2.